Consider the following 311-residue polypeptide: Energy-coupling factor transporter ATP-binding protein EcfA (311 aa).

Positions 2-237 (IELRDLSYSY…AELIRRASLR (236 aa)) constitute an ABC transporter domain. Residue 35–42 (GPNGAGKS) coordinates ATP.

The protein belongs to the ABC transporter superfamily. Energy-coupling factor EcfA family. As to quaternary structure, forms a stable energy-coupling factor (ECF) transporter complex composed of 2 membrane-embedded substrate-binding proteins (S component), 2 ATP-binding proteins (A component) and 2 transmembrane proteins (T component).

It localises to the cell membrane. In terms of biological role, ATP-binding (A) component of a common energy-coupling factor (ECF) ABC-transporter complex. Unlike classic ABC transporters this ECF transporter provides the energy necessary to transport a number of different substrates. In Methanothermobacter thermautotrophicus (strain ATCC 29096 / DSM 1053 / JCM 10044 / NBRC 100330 / Delta H) (Methanobacterium thermoautotrophicum), this protein is Energy-coupling factor transporter ATP-binding protein EcfA.